The chain runs to 98 residues: MLSISMNMTLAFTTALLGMLMFRSHLMSSLLCLEGMMLSMFILSTLLILNMQYTITFMMPILLLVFAACEAAIGLALLVTVSNTYGLDYIQNLNLLQC.

A run of 2 helical transmembrane segments spans residues 29–49 and 61–81; these read SLLC…LLIL and ILLL…LVTV.

This sequence belongs to the complex I subunit 4L family. As to quaternary structure, core subunit of respiratory chain NADH dehydrogenase (Complex I) which is composed of 45 different subunits.

The protein localises to the mitochondrion inner membrane. The enzyme catalyses a ubiquinone + NADH + 5 H(+)(in) = a ubiquinol + NAD(+) + 4 H(+)(out). Functionally, core subunit of the mitochondrial membrane respiratory chain NADH dehydrogenase (Complex I) which catalyzes electron transfer from NADH through the respiratory chain, using ubiquinone as an electron acceptor. Part of the enzyme membrane arm which is embedded in the lipid bilayer and involved in proton translocation. The polypeptide is NADH-ubiquinone oxidoreductase chain 4L (MT-ND4L) (Cheirogaleus medius (Fat-tailed dwarf lemur)).